Here is a 612-residue protein sequence, read N- to C-terminus: Threonine--tRNA ligase (612 aa).

The catalytic stretch occupies residues 218 to 509 (DHRKLGVELG…LSEHFGGNFP (292 aa)). Residues cysteine 310, histidine 361, and histidine 486 each coordinate Zn(2+).

The protein belongs to the class-II aminoacyl-tRNA synthetase family. As to quaternary structure, homodimer. It depends on Zn(2+) as a cofactor.

It localises to the cytoplasm. It carries out the reaction tRNA(Thr) + L-threonine + ATP = L-threonyl-tRNA(Thr) + AMP + diphosphate + H(+). In terms of biological role, catalyzes the attachment of threonine to tRNA(Thr) in a two-step reaction: L-threonine is first activated by ATP to form Thr-AMP and then transferred to the acceptor end of tRNA(Thr). Also edits incorrectly charged L-seryl-tRNA(Thr). In Helicobacter pylori (strain ATCC 700392 / 26695) (Campylobacter pylori), this protein is Threonine--tRNA ligase.